The following is a 196-amino-acid chain: dTTP/UTP pyrophosphatase (196 aa).

The active-site Proton acceptor is the Asp-75.

It belongs to the Maf family. YhdE subfamily. A divalent metal cation serves as cofactor.

The protein localises to the cytoplasm. It catalyses the reaction dTTP + H2O = dTMP + diphosphate + H(+). The enzyme catalyses UTP + H2O = UMP + diphosphate + H(+). Its function is as follows. Nucleoside triphosphate pyrophosphatase that hydrolyzes dTTP and UTP. May have a dual role in cell division arrest and in preventing the incorporation of modified nucleotides into cellular nucleic acids. This chain is dTTP/UTP pyrophosphatase, found in Wolbachia pipientis subsp. Culex pipiens (strain wPip).